Here is a 688-residue protein sequence, read N- to C-terminus: Potassium-transporting ATPase ATP-binding subunit (688 aa).

4 helical membrane passes run 34–54 (PVMF…LAIL), 62–82 (AMFT…ANMA), 219–239 (VALT…TATL), and 260–280 (VLVA…LSAI). The 4-aspartylphosphate intermediate role is filled by aspartate 313. Residues aspartate 350, glutamate 354, 383–390 (FSAQTRMS), and lysine 401 contribute to the ATP site. The Mg(2+) site is built by aspartate 524 and aspartate 528. 3 consecutive transmembrane segments (helical) span residues 594–614 (FAII…LNIM), 622–642 (AILS…PLAL), and 662–682 (IYGL…DLLL).

Belongs to the cation transport ATPase (P-type) (TC 3.A.3) family. Type IA subfamily. As to quaternary structure, the system is composed of three essential subunits: KdpA, KdpB and KdpC.

It is found in the cell inner membrane. The enzyme catalyses K(+)(out) + ATP + H2O = K(+)(in) + ADP + phosphate + H(+). Functionally, part of the high-affinity ATP-driven potassium transport (or Kdp) system, which catalyzes the hydrolysis of ATP coupled with the electrogenic transport of potassium into the cytoplasm. This subunit is responsible for energy coupling to the transport system and for the release of the potassium ions to the cytoplasm. The protein is Potassium-transporting ATPase ATP-binding subunit of Yersinia pseudotuberculosis serotype I (strain IP32953).